We begin with the raw amino-acid sequence, 644 residues long: 3D-(3,5/4)-trihydroxycyclohexane-1,2-dione hydrolase (644 aa).

Position 65 (E65) interacts with thiamine diphosphate. The thiamine pyrophosphate binding stretch occupies residues 442–522; that stretch reads SLPGDLHKVW…INILLFDNAG (81 aa). The Mg(2+) site is built by D493 and N520.

The protein belongs to the TPP enzyme family. It depends on Mg(2+) as a cofactor. The cofactor is thiamine diphosphate.

It catalyses the reaction 3D-3,5/4-trihydroxycyclohexane-1,2-dione + H2O = 5-deoxy-D-glucuronate + H(+). It participates in polyol metabolism; myo-inositol degradation into acetyl-CoA; acetyl-CoA from myo-inositol: step 3/7. In terms of biological role, involved in the cleavage of the C1-C2 bond of 3D-(3,5/4)-trihydroxycyclohexane-1,2-dione (THcHDO) to yield 5-deoxy-glucuronate (5DG). The polypeptide is 3D-(3,5/4)-trihydroxycyclohexane-1,2-dione hydrolase (Clostridium tetani (strain Massachusetts / E88)).